A 98-amino-acid polypeptide reads, in one-letter code: Cell division topological specificity factor (98 aa).

Belongs to the MinE family.

Functionally, prevents the cell division inhibition by proteins MinC and MinD at internal division sites while permitting inhibition at polar sites. This ensures cell division at the proper site by restricting the formation of a division septum at the midpoint of the long axis of the cell. The protein is Cell division topological specificity factor of Nitrosomonas europaea (strain ATCC 19718 / CIP 103999 / KCTC 2705 / NBRC 14298).